Reading from the N-terminus, the 84-residue chain is Cryptic plasmid protein A (84 aa).

This is Cryptic plasmid protein A (cppA) from Neisseria gonorrhoeae.